The primary structure comprises 145 residues: Functional amyloid chaperone FapA (145 aa).

The first 27 residues, 1–27 (MRKRDKRLYHLLLVGCVLGSLSLTAQA), serve as a signal peptide directing secretion.

Belongs to the FapA family. As to quaternary structure, monomer in solution. Interacts with FapC but not FapB in vitro.

The protein resides in the periplasm. Functionally, an intrinsically disordered chaperone for fibril amyloid FapC that guards against fibrillation, pro within the periplasm. Upon overexpression of the endogenous six-gene locus (fapA-fapF), cells form large clumps during liquid growth, make large amounts of biofilm and produce relatively unstable amyloid fibrils. This is Functional amyloid chaperone FapA from Pseudomonas putida (strain ATCC 700007 / DSM 6899 / JCM 31910 / BCRC 17059 / LMG 24140 / F1).